Reading from the N-terminus, the 255-residue chain is Pimeloyl-[acyl-carrier protein] methyl ester esterase (255 aa).

Substrate-binding positions include W18, 78-79 (SL), and 139-143 (FLALD). S78 functions as the Nucleophile in the catalytic mechanism. Residues D203 and H233 contribute to the active site. H233 is a substrate binding site.

The protein belongs to the AB hydrolase superfamily. Carboxylesterase BioH family. As to quaternary structure, monomer.

Its subcellular location is the cytoplasm. The catalysed reaction is 6-carboxyhexanoyl-[ACP] methyl ester + H2O = 6-carboxyhexanoyl-[ACP] + methanol + H(+). Its pathway is cofactor biosynthesis; biotin biosynthesis. The physiological role of BioH is to remove the methyl group introduced by BioC when the pimeloyl moiety is complete. It allows to synthesize pimeloyl-ACP via the fatty acid synthetic pathway through the hydrolysis of the ester bonds of pimeloyl-ACP esters. This chain is Pimeloyl-[acyl-carrier protein] methyl ester esterase, found in Xylella fastidiosa (strain M23).